Consider the following 804-residue polypeptide: MNYNHNQIEKKWQDYWDENKTFKTNDNLGQKKFYALDMFPYPSGAGLHVGHPEGYTATDIISRYKRMQGYNVLHPMGWDAFGLPAEQYALDTGNDPREFTKKNIQTFKRQIKELGFSYDWDREVNTTDPEYYKWTQWIFIQLYNKGLAYVDEVAVNWCPALGTVLSNEEVIDGVSERGGHPVYRKPMKQWVLKITEYADQLLADLDDLDWPESLKDMQRNWIGRSEGAKVSFDVDNSEGKVEVFTTRPDTIYGASFLVLSPEHALVDSITTDEYKDQVKAYQTEASKKSDLERTDLAKDKSGVFTGAYAINPLSGEKVQIWIADYVLSTYGTGAIMAVPAHDDRDYEFAKKFDLPIIEVIEGGNVEEAAYTGEGKHINSGELDGLENEAAITKAIQLLEKKGAGEKKVNYKLRDWLFSRQRYWGEPIPVIHWEDGTMTTVPEEELPLLLPETDEIKPSGTGESPLANIDSFVNVVDEKTGMKGRRETNTMPQWAGSCWYYLRYIDPKNENMLADPEKLKHWLPVDLYIGGVEHAVLHLLYARFWHKVLYDLGIVPTKEPFQKLFNQGMILGEGNEKMSKSKGNVINPDDIVQSHGADTLRLYEMFMGPLDAAIAWSEKGLDGSRRFLDRVWRLMVNEDGTLSSKIVTTNNKSLDKVYNQTVKKVTEDFETLGFNTAISQLMVFINECYKVDEVYKPYIEGFVKMLAPIAPHIGEELWSKLGHEESITYQPWPTYDEALLVDDEVEIVVQVNGKLRAKIKIAKDTSKEEMQEIALSNDNVKASIEGKDIMKVIAVPQKLVNIVAK.

Positions 40 to 51 match the 'HIGH' region motif; sequence PYPSGAGLHVGH. The 'KMSKS' region motif lies at 576–580; that stretch reads KMSKS. Lys-579 contributes to the ATP binding site.

Belongs to the class-I aminoacyl-tRNA synthetase family.

It localises to the cytoplasm. The enzyme catalyses tRNA(Leu) + L-leucine + ATP = L-leucyl-tRNA(Leu) + AMP + diphosphate. This is Leucine--tRNA ligase from Staphylococcus aureus (strain MRSA252).